A 220-amino-acid polypeptide reads, in one-letter code: Large ribosomal subunit protein uL16 (220 aa).

This sequence belongs to the universal ribosomal protein uL16 family. Component of the small ribosomal subunit. Mature ribosomes consist of a small (40S) and a large (60S) subunit. The 40S subunit contains about 33 different proteins and 1 molecule of RNA (18S). The 60S subunit contains about 49 different proteins and 3 molecules of RNA (25S, 5.8S and 5S).

The chain is Large ribosomal subunit protein uL16 (RPL10) from Euphorbia esula (Leafy spurge).